A 344-amino-acid polypeptide reads, in one-letter code: Probable magnesium transporter NIPA9 (344 aa).

Residues 1–46 (MWESICLTLAATAGNNIGKVLQKKGTIILPPLSLKLKVLRAYAENK) are Cytoplasmic-facing. A run of 2 helical transmembrane segments spans residues 47-67 (PWAL…RALS) and 68-88 (LAPV…LSVF). Topologically, residues 89–98 (SHFYLKEVMN) are cytoplasmic. The chain crosses the membrane as a helical span at residues 99-119 (VFDWIGITVAGIGTIGVGAGG). Residues 120 to 125 (EEQEAS) are Extracellular-facing. A helical transmembrane segment spans residues 126–146 (LISVFQLLWLALVVAILFVLL). The Cytoplasmic segment spans residues 147 to 166 (NAWLHIFKRQRREQELGEYE). A helical membrane pass occupies residues 167-187 (VVEEIIYGLESGILFGMASVV). Residues 188-191 (SKMG) lie on the Extracellular side of the membrane. The helical transmembrane segment at 192-212 (FVFVEQGFSTMFIPMCISISI) threads the bilayer. Residues 213 to 231 (CCSGTGFFYQTRGLKHGRA) lie on the Cytoplasmic side of the membrane. The chain crosses the membrane as a helical span at residues 232–252 (IVVSTCAAVASIVTGVVAGMF). The Extracellular segment spans residues 253 to 265 (ALGEKLPTSPSGR). A helical transmembrane segment spans residues 266-286 (LLLLLGWLLIMLGVVLLVTSS). The Cytoplasmic segment spans residues 287 to 344 (RLIRHLPRSFRRSRQTSLERGFNIRRTTSHTPKDTNPSAVIQAATLHHLLSSPSKDKD).

Belongs to the NIPA (TC 2.A.7) family. As to quaternary structure, homodimer.

It localises to the cell membrane. The protein localises to the early endosome. Functionally, acts as a Mg(2+) transporter. Can also transport other divalent cations such as Fe(2+), Sr(2+), Ba(2+), Mn(2+) and Co(2+) but to a much less extent than Mg(2+). The protein is Probable magnesium transporter NIPA9 of Arabidopsis thaliana (Mouse-ear cress).